We begin with the raw amino-acid sequence, 236 residues long: Ubiquinone biosynthesis O-methyltransferase (236 aa).

S-adenosyl-L-methionine contacts are provided by Arg-39, Gly-59, Asp-80, and Met-124.

It belongs to the methyltransferase superfamily. UbiG/COQ3 family.

It carries out the reaction a 3-demethylubiquinol + S-adenosyl-L-methionine = a ubiquinol + S-adenosyl-L-homocysteine + H(+). The enzyme catalyses a 3-(all-trans-polyprenyl)benzene-1,2-diol + S-adenosyl-L-methionine = a 2-methoxy-6-(all-trans-polyprenyl)phenol + S-adenosyl-L-homocysteine + H(+). It participates in cofactor biosynthesis; ubiquinone biosynthesis. In terms of biological role, O-methyltransferase that catalyzes the 2 O-methylation steps in the ubiquinone biosynthetic pathway. The chain is Ubiquinone biosynthesis O-methyltransferase from Shewanella pealeana (strain ATCC 700345 / ANG-SQ1).